The primary structure comprises 522 residues: Cytochrome P450 monooxygenase sirB (522 aa).

A helical transmembrane segment spans residues Ala-22–Val-42. A glycan (N-linked (GlcNAc...) asparagine) is linked at Asn-191. The helical transmembrane segment at Val-304–Tyr-324 threads the bilayer. Residue Cys-462 participates in heme binding.

This sequence belongs to the cytochrome P450 family. Heme serves as cofactor.

The protein resides in the membrane. The protein operates within mycotoxin biosynthesis. In terms of biological role, cytochrome P450 monooxygenase; part of the gene cluster that mediates the biosynthesis of sirodesmin PL, an epipolythiodioxopiperazine (ETP) characterized by a disulfide bridged cyclic dipeptide and that acts as a phytotoxin which is involved in the blackleg didease of canola. SirD catalyzes the O-prenylation of L-tyrosine (L-Tyr) in the presence of dimethylallyl diphosphate (DMAPP) to yield 4-O-dimethylallyl-L-Tyr, and therefore represents probably the first pathway-specific enzyme in the biosynthesis of sirodesmin PL. 4-O-dimethylallyl-L-Tyr, then undergoes condensation with L-Ser in a reaction catalyzed by the non-ribosomal peptide synthase sirP to form the diketopiperazine (DKP) backbone. Further bishydroxylation of the DKP performed by the cytochrome P450 monooxygenase sirC leads to the production of the intermediate phomamide. This step is essential to form the reactive thiol group required for toxicity of sirodesmin PL. The next steps of sirodesmin biosynthesis are not well understood yet, but some predictions could be made from intermediate compounds identification. Phomamide is converted into phomalizarine via oxidation, probably by sirT. Further oxidation, methylation (by sirM or sirN) and reduction steps convert phomalizarine to deacetyl sirodesmin. Finally, acetyltransferase sirH probably acetylates deacetyl sirodesmin to produce sirodesmin PL. In Leptosphaeria maculans (Blackleg fungus), this protein is Cytochrome P450 monooxygenase sirB.